Reading from the N-terminus, the 505-residue chain is Nicotinamide phosphoribosyltransferase (505 aa).

Residue arginine 196 participates in diphosphate binding. Aspartate 219 lines the beta-nicotinamide D-ribonucleotide pocket. Diphosphate contacts are provided by histidine 246 and arginine 314. Beta-nicotinamide D-ribonucleotide is bound by residues 314 to 316 (RPD), 369 to 370 (GD), and arginine 408.

It belongs to the NAPRTase family.

The enzyme catalyses beta-nicotinamide D-ribonucleotide + diphosphate = 5-phospho-alpha-D-ribose 1-diphosphate + nicotinamide + H(+). It functions in the pathway cofactor biosynthesis; NAD(+) biosynthesis; nicotinamide D-ribonucleotide from 5-phospho-alpha-D-ribose 1-diphosphate and nicotinamide: step 1/1. 10-fold more active in the presence of saturating ATP. Functionally, catalyzes the condensation of nicotinamide with 5-phosphoribosyl-1-pyrophosphate to yield nicotinamide mononucleotide, an intermediate in the biosynthesis of NAD. Functions in the nondeamidating salvage pathway for production of NAD from nicotinamide. Displays a strict preference for nicotinamide over nicotinate substrate. The sequence is that of Nicotinamide phosphoribosyltransferase from Acinetobacter baylyi (strain ATCC 33305 / BD413 / ADP1).